A 990-amino-acid polypeptide reads, in one-letter code: MTPLRFPSNLPLRAVAFDEDQSMPHRRPIDAANDFVRRHIGPSPQDIAAMLATAGAGSLEQLVAETLPYAIRHREPLKLGAPLTESEALAHMSELGAQNQVFTSLIGQGYYGTILPTVIQRNILENPAWYTAYTPYQPEISQGRLEALFNFQTMICDLTGLDVANASLLDEGTAAAEAMALAERAAAKNAKAFFVDADTHPQTIAVLRTRAEPLGWRIIVGNPETGLEGADVFGALLQYPGSSGRLSDPRAVIAALRKKGALAVVAADLLALTLITPPGELGADIAIGSAQRFGVPMGYGGPHAAYMAVRDSLKRSLPGRIVGLSIDSHGQPAYRLALQTREQHIRREKATSNICTAQVLLAVINAMYAVYHGPDGLAAIARRVHRRTAVLAAGLQQLGFAPTHGNYFDTLTIEVGDRRDAIVARAEAENINLRINASSLGISLDETTTPATVEALWRAFGGSLDYAAVERDAGDALGTALPAALKRTSDYLTQPAFQDYRSETELLRYMRKLSDRDLALDRAMIPLGSCTMKLNATTEMMPLTWPEFGSLHPFVPKAQAAGYHALFERLETWLAEITGYDAVSLQPNSGAQGEYAGLLTIRGYHLSRGEPHRKVCLIPSSAHGTNPASAAMAGMDVVVVACDAHGDVDVDDLRAKAEAHSADLAAVMITYPSTHGVFEEHIREICDIVHAHGGQVYLDGANLNAQVGLARPGSYGADVSHLNLHKTFCIPHGGGGPGMGPIGVKAHLAPFLPGHPAEGEPLNGGLHGGGTVSAAPWGSASILTISYIYILMMGAAGLKRATEIAILNANYIAAKLHPHFPVLYRNPRGRVAHECIIDPRALKTSTGVTVDDIAKRLIDYGFHAPTMSFPVPGTLMIEPTESESKAEIDRFCDAMIAIRREIAQVEAGRYPIEQSPLRHAPHTAHDVTSAEWTRPYPRTEGCFPAPNSRTDKYWSPVGRVDNVYGDRNLICSCPPVEDYALAADYARAAE.

Lys726 carries the N6-(pyridoxal phosphate)lysine modification.

The protein belongs to the GcvP family. The glycine cleavage system is composed of four proteins: P, T, L and H. Pyridoxal 5'-phosphate is required as a cofactor.

The catalysed reaction is N(6)-[(R)-lipoyl]-L-lysyl-[glycine-cleavage complex H protein] + glycine + H(+) = N(6)-[(R)-S(8)-aminomethyldihydrolipoyl]-L-lysyl-[glycine-cleavage complex H protein] + CO2. Its function is as follows. The glycine cleavage system catalyzes the degradation of glycine. The P protein binds the alpha-amino group of glycine through its pyridoxal phosphate cofactor; CO(2) is released and the remaining methylamine moiety is then transferred to the lipoamide cofactor of the H protein. This Rhodopseudomonas palustris (strain ATCC BAA-98 / CGA009) protein is Glycine dehydrogenase (decarboxylating).